The sequence spans 100 residues: Small ribosomal subunit protein uS14c (100 aa).

It belongs to the universal ribosomal protein uS14 family. As to quaternary structure, part of the 30S ribosomal subunit.

The protein resides in the plastid. Its subcellular location is the chloroplast. In terms of biological role, binds 16S rRNA, required for the assembly of 30S particles. The sequence is that of Small ribosomal subunit protein uS14c from Carica papaya (Papaya).